We begin with the raw amino-acid sequence, 420 residues long: Serine--tRNA ligase (420 aa).

Residue 229–231 (TAE) participates in L-serine binding. 260-262 (RAE) lines the ATP pocket. Glutamate 283 serves as a coordination point for L-serine. 347–350 (EISS) provides a ligand contact to ATP. Serine 382 lines the L-serine pocket.

This sequence belongs to the class-II aminoacyl-tRNA synthetase family. Type-1 seryl-tRNA synthetase subfamily. Homodimer. The tRNA molecule binds across the dimer.

Its subcellular location is the cytoplasm. It carries out the reaction tRNA(Ser) + L-serine + ATP = L-seryl-tRNA(Ser) + AMP + diphosphate + H(+). The catalysed reaction is tRNA(Sec) + L-serine + ATP = L-seryl-tRNA(Sec) + AMP + diphosphate + H(+). It participates in aminoacyl-tRNA biosynthesis; selenocysteinyl-tRNA(Sec) biosynthesis; L-seryl-tRNA(Sec) from L-serine and tRNA(Sec): step 1/1. In terms of biological role, catalyzes the attachment of serine to tRNA(Ser). Is also able to aminoacylate tRNA(Sec) with serine, to form the misacylated tRNA L-seryl-tRNA(Sec), which will be further converted into selenocysteinyl-tRNA(Sec). This chain is Serine--tRNA ligase, found in Caldicellulosiruptor saccharolyticus (strain ATCC 43494 / DSM 8903 / Tp8T 6331).